The chain runs to 23 residues: GKCGEINGSCDECYGGSVTCDCY.

An intrachain disulfide couples Cys10 to Cys20.

In terms of tissue distribution, expressed by the venom gland.

Its subcellular location is the secreted. In terms of biological role, insecticidal neurotoxin that reversibly inhibits the N-methyl-D-aspartate (NMDA)-subtype of ionotropic glutamate receptor (GRIN) and inhibits inactivation of insect sodium channels (Nav). In vivo, is highly toxic to insects. The polypeptide is U1-ctenitoxin-Co1a (Ctenus ornatus (Brazilian spider)).